A 335-amino-acid chain; its full sequence is MMWVAVDVMSGDYGPEKIIEGAVNAVNQDGANVVLVGKEEEIGEILLKFEYDTNKVRIQHASEIIDMNDSPSIAVRTLQDSSIVQATQIVADKTCVGMFSPGNTGATMASALLYLGRIPGVLRPPIAAPIPQENGPPMLLVDAGANVDCKPDYLAQFAVMGEIYSKLIFNILNPKVGILSNGEEDKKGNTVSLKAFEMIKKLPINFVGNVEGRDLYGSGKDVDVVVCDGFIGNIVLKATEGLSKSIFNVLRESIKQSSLAQTGALLLKPTLGAIKKRLDYAEYGGALLLGVDGICLIGHGSSNALAVQSAIRVAVECAQHQINDRIAADLKKYNI.

It belongs to the PlsX family. In terms of assembly, homodimer. Probably interacts with PlsY.

Its subcellular location is the cytoplasm. It catalyses the reaction a fatty acyl-[ACP] + phosphate = an acyl phosphate + holo-[ACP]. It participates in lipid metabolism; phospholipid metabolism. In terms of biological role, catalyzes the reversible formation of acyl-phosphate (acyl-PO(4)) from acyl-[acyl-carrier-protein] (acyl-ACP). This enzyme utilizes acyl-ACP as fatty acyl donor, but not acyl-CoA. This is Phosphate acyltransferase from Leptospira interrogans serogroup Icterohaemorrhagiae serovar copenhageni (strain Fiocruz L1-130).